A 404-amino-acid chain; its full sequence is L-cysteine:1D-myo-inositol 2-amino-2-deoxy-alpha-D-glucopyranoside ligase 1 (404 aa).

Cys47 serves as a coordination point for Zn(2+). Residues 47–50 (CGIT), Thr62, and 85–87 (NIT) contribute to the L-cysteinyl-5'-AMP site. The 'HIGH' region signature appears at 49-59 (ITPYDSTHLGH). The short motif at 188-193 (ERGGDP) is the 'ERGGDP' region element. Position 228 (Trp228) interacts with L-cysteinyl-5'-AMP. Position 232 (Cys232) interacts with Zn(2+). An L-cysteinyl-5'-AMP-binding site is contributed by 250–252 (GSD). His257 serves as a coordination point for Zn(2+). Ile284 lines the L-cysteinyl-5'-AMP pocket. Residues 290-294 (KMSKS) carry the 'KMSKS' region motif.

The protein belongs to the class-I aminoacyl-tRNA synthetase family. MshC subfamily. In terms of assembly, monomer. Requires Zn(2+) as cofactor.

The enzyme catalyses 1D-myo-inositol 2-amino-2-deoxy-alpha-D-glucopyranoside + L-cysteine + ATP = 1D-myo-inositol 2-(L-cysteinylamino)-2-deoxy-alpha-D-glucopyranoside + AMP + diphosphate + H(+). Its function is as follows. Catalyzes the ATP-dependent condensation of GlcN-Ins and L-cysteine to form L-Cys-GlcN-Ins. This is L-cysteine:1D-myo-inositol 2-amino-2-deoxy-alpha-D-glucopyranoside ligase 1 from Corynebacterium urealyticum (strain ATCC 43042 / DSM 7109).